Consider the following 331-residue polypeptide: Adenosine deaminase (331 aa).

Zn(2+)-binding residues include His12 and His14. His14, Asp16, and Gly170 together coordinate substrate. Residue His197 coordinates Zn(2+). The active-site Proton donor is Glu200. Asp278 serves as a coordination point for Zn(2+). Position 279 (Asp279) interacts with substrate.

Belongs to the metallo-dependent hydrolases superfamily. Adenosine and AMP deaminases family. Adenosine deaminase subfamily. The cofactor is Zn(2+).

The catalysed reaction is adenosine + H2O + H(+) = inosine + NH4(+). It carries out the reaction 2'-deoxyadenosine + H2O + H(+) = 2'-deoxyinosine + NH4(+). Catalyzes the hydrolytic deamination of adenosine and 2-deoxyadenosine. This chain is Adenosine deaminase, found in Shewanella denitrificans (strain OS217 / ATCC BAA-1090 / DSM 15013).